The following is a 164-amino-acid chain: Urease subunit beta (164 aa).

Polar residues-rich tracts occupy residues 1–10 and 20–30; these read MSTKTNSTKA and TNRGTKSSAGY. The segment at 1 to 30 is disordered; sequence MSTKTNSTKATSEKTDSLKTNRGTKSSAGY.

The protein belongs to the urease beta subunit family. In terms of assembly, heterotrimer of UreA (gamma), UreB (beta) and UreC (alpha) subunits. Three heterotrimers associate to form the active enzyme.

It localises to the cytoplasm. It catalyses the reaction urea + 2 H2O + H(+) = hydrogencarbonate + 2 NH4(+). It participates in nitrogen metabolism; urea degradation; CO(2) and NH(3) from urea (urease route): step 1/1. In terms of biological role, expression of the urease operon increases the likelihood of bacterial survival by contributing to acid resistance in vitro and in vivo in BALB/c mice. Y.enterocolitica enters the body via an oral path and must survive the acidic stomach before being able to colonize the intestinal mucosa. The protein is Urease subunit beta of Yersinia enterocolitica.